The chain runs to 360 residues: Mannose-1-phosphate guanylyltransferase catalytic subunit beta (360 aa).

A substrate-binding domain region spans residues 2-222 (KALILVGGYG…QGFWMDIGQP (221 aa)). Position 110 (Asp110) interacts with GDP-alpha-D-mannose. Position 110 (Asp110) interacts with Mg(2+). Residue Lys162 is part of the active site. Asp218 serves as a coordination point for GDP-alpha-D-mannose. Asp218 is a Mg(2+) binding site. The hexapeptide repeat domain stretch occupies residues 245-360 (RAGPGFLGNV…DSVPEPRIIM (116 aa)).

It belongs to the transferase hexapeptide repeat family. Component of the GMPPA-GMPPB mannose-1-phosphate guanylyltransferase complex composed of 4 gmppa subunits and 8 gmppb subunits; the complex is organized into three layers, a central layer made up of 2 gmppa dimers sandwiched between two layers each made up of 2 gmppb dimers. Catalytic activity of gmppb is reduced when part of the complex and binding of GDP-alpha-D-Mannose by gmppa induces allosteric feedback inhibition of gmppb. It depends on Mg(2+) as a cofactor.

The catalysed reaction is alpha-D-mannose 1-phosphate + GTP + H(+) = GDP-alpha-D-mannose + diphosphate. It participates in nucleotide-sugar biosynthesis; GDP-alpha-D-mannose biosynthesis; GDP-alpha-D-mannose from alpha-D-mannose 1-phosphate (GTP route): step 1/1. With respect to regulation, enzyme activity is reduced by incorporation into the GMPPA-GMPPB mannose-1-phosphate guanylyltransferase complex. Allosterically inhibited, when part of the GMPPA-GMPPB complex, by GDP-alpha-D-mannose binding to GMPPA. Catalytic subunit of the GMPPA-GMPPB mannose-1-phosphate guanylyltransferase complex. Catalyzes the formation of GDP-mannose, an essential precursor of glycan moieties of glycoproteins and glycolipids. Can catalyze the reverse reaction in vitro. Together with GMPPA regulates GDP-alpha-D-mannose levels. The chain is Mannose-1-phosphate guanylyltransferase catalytic subunit beta (gmppb) from Danio rerio (Zebrafish).